Here is a 154-residue protein sequence, read N- to C-terminus: Crossover junction endodeoxyribonuclease RuvC (154 aa).

Catalysis depends on residues aspartate 7, glutamate 67, and aspartate 139. Mg(2+) is bound by residues aspartate 7, glutamate 67, and aspartate 139.

This sequence belongs to the RuvC family. Homodimer which binds Holliday junction (HJ) DNA. The HJ becomes 2-fold symmetrical on binding to RuvC with unstacked arms; it has a different conformation from HJ DNA in complex with RuvA. In the full resolvosome a probable DNA-RuvA(4)-RuvB(12)-RuvC(2) complex forms which resolves the HJ. Requires Mg(2+) as cofactor.

Its subcellular location is the cytoplasm. It catalyses the reaction Endonucleolytic cleavage at a junction such as a reciprocal single-stranded crossover between two homologous DNA duplexes (Holliday junction).. The RuvA-RuvB-RuvC complex processes Holliday junction (HJ) DNA during genetic recombination and DNA repair. Endonuclease that resolves HJ intermediates. Cleaves cruciform DNA by making single-stranded nicks across the HJ at symmetrical positions within the homologous arms, yielding a 5'-phosphate and a 3'-hydroxyl group; requires a central core of homology in the junction. The consensus cleavage sequence is 5'-(A/T)TT(C/G)-3'. Cleavage occurs on the 3'-side of the TT dinucleotide at the point of strand exchange. HJ branch migration catalyzed by RuvA-RuvB allows RuvC to scan DNA until it finds its consensus sequence, where it cleaves and resolves the cruciform DNA. The sequence is that of Crossover junction endodeoxyribonuclease RuvC from Parasynechococcus marenigrum (strain WH8102).